Consider the following 745-residue polypeptide: uncharacterized protein (745 aa).

In terms of domain architecture, HTH araC/xylS-type spans 158-256; it reads NQVCDYIELH…HQTPKQYRGD (99 aa). 2 DNA-binding regions (H-T-H motif) span residues 175-196 and 223-246; these read SELS…TESL and ITDI…KHFT.

This is an uncharacterized protein from Staphylococcus aureus (strain COL).